A 244-amino-acid polypeptide reads, in one-letter code: tRNA pseudouridine synthase B (244 aa).

D46 (nucleophile) is an active-site residue.

This sequence belongs to the pseudouridine synthase TruB family. Type 1 subfamily.

The catalysed reaction is uridine(55) in tRNA = pseudouridine(55) in tRNA. In terms of biological role, responsible for synthesis of pseudouridine from uracil-55 in the psi GC loop of transfer RNAs. This chain is tRNA pseudouridine synthase B, found in Bordetella bronchiseptica (strain ATCC BAA-588 / NCTC 13252 / RB50) (Alcaligenes bronchisepticus).